Consider the following 90-residue polypeptide: Sakacin-A immunity factor (90 aa).

Imparts immunity to sakacin-A to naturally sensitive host strains. The polypeptide is Sakacin-A immunity factor (saiA) (Latilactobacillus sakei (Lactobacillus sakei)).